A 357-amino-acid polypeptide reads, in one-letter code: MEYKRFKTRQIKVGNVLIGGDAPISVQSMLFTKTRDIEGSLEQINRLYFAGANIVRLACLDMADARALKEIKAKSPLPLIVDIHFNHNLAVYCAEFIDGVRINPGNIGSKENIKEVVKACKERGIPIRIGVNHGSIEKQFSDKFGYGVDAMLESAMYNIKLLEDLDFFDIKISMKTSDAQKTIEAYERLRPLCDYPFHLGVTEAGTKFHSTVKSSIALGNLLLKGIGDTMRVSMTGELEEEIRVARAILQDSGVQKSGVNIISCPTCGRIQSDLLSAIKIVEEKTKHIKEPLNISVMGCVVNALGEAKGADVAIAFGKNQGLVIRHGEVVAKLKESELVDRFLAEVEDEVKSRAVKE.

Cysteine 264, cysteine 267, cysteine 299, and glutamate 306 together coordinate [4Fe-4S] cluster.

This sequence belongs to the IspG family. The cofactor is [4Fe-4S] cluster.

It catalyses the reaction (2E)-4-hydroxy-3-methylbut-2-enyl diphosphate + oxidized [flavodoxin] + H2O + 2 H(+) = 2-C-methyl-D-erythritol 2,4-cyclic diphosphate + reduced [flavodoxin]. Its pathway is isoprenoid biosynthesis; isopentenyl diphosphate biosynthesis via DXP pathway; isopentenyl diphosphate from 1-deoxy-D-xylulose 5-phosphate: step 5/6. In terms of biological role, converts 2C-methyl-D-erythritol 2,4-cyclodiphosphate (ME-2,4cPP) into 1-hydroxy-2-methyl-2-(E)-butenyl 4-diphosphate. The polypeptide is 4-hydroxy-3-methylbut-2-en-1-yl diphosphate synthase (flavodoxin) (Campylobacter jejuni subsp. jejuni serotype O:23/36 (strain 81-176)).